The following is a 1412-amino-acid chain: DNA-directed RNA polymerase subunit beta' (1412 aa).

The Zn(2+) site is built by C70, C72, C85, and C88. Residues D460, D462, and D464 each coordinate Mg(2+). Zn(2+) is bound by residues C819, C893, C900, and C903. Positions 1393-1412 are disordered; that stretch reads EAFEFGTPSAPAEEPQHPAE.

The protein belongs to the RNA polymerase beta' chain family. In terms of assembly, the RNAP catalytic core consists of 2 alpha, 1 beta, 1 beta' and 1 omega subunit. When a sigma factor is associated with the core the holoenzyme is formed, which can initiate transcription. The cofactor is Mg(2+). Zn(2+) serves as cofactor.

It carries out the reaction RNA(n) + a ribonucleoside 5'-triphosphate = RNA(n+1) + diphosphate. In terms of biological role, DNA-dependent RNA polymerase catalyzes the transcription of DNA into RNA using the four ribonucleoside triphosphates as substrates. This Burkholderia mallei (strain NCTC 10229) protein is DNA-directed RNA polymerase subunit beta'.